The chain runs to 344 residues: Ferrochelatase (344 aa).

His-214 and Glu-295 together coordinate Fe cation.

The protein belongs to the ferrochelatase family.

It localises to the cytoplasm. It catalyses the reaction heme b + 2 H(+) = protoporphyrin IX + Fe(2+). It participates in porphyrin-containing compound metabolism; protoheme biosynthesis; protoheme from protoporphyrin-IX: step 1/1. Functionally, catalyzes the ferrous insertion into protoporphyrin IX. This is Ferrochelatase from Rhizobium etli (strain ATCC 51251 / DSM 11541 / JCM 21823 / NBRC 15573 / CFN 42).